The sequence spans 286 residues: Diaminopimelate epimerase (286 aa).

Residues N13 and N66 each contribute to the substrate site. The Proton donor role is filled by C75. Substrate is bound by residues 76-77, N165, N198, and 216-217; these read GN and ER. The active-site Proton acceptor is the C225. 226 to 227 serves as a coordination point for substrate; it reads GT.

The protein belongs to the diaminopimelate epimerase family. As to quaternary structure, homodimer.

The protein localises to the cytoplasm. It catalyses the reaction (2S,6S)-2,6-diaminopimelate = meso-2,6-diaminopimelate. The protein operates within amino-acid biosynthesis; L-lysine biosynthesis via DAP pathway; DL-2,6-diaminopimelate from LL-2,6-diaminopimelate: step 1/1. Catalyzes the stereoinversion of LL-2,6-diaminopimelate (L,L-DAP) to meso-diaminopimelate (meso-DAP), a precursor of L-lysine and an essential component of the bacterial peptidoglycan. This is Diaminopimelate epimerase from Thermosynechococcus vestitus (strain NIES-2133 / IAM M-273 / BP-1).